Here is a 288-residue protein sequence, read N- to C-terminus: Bifunctional protein FolD (288 aa).

166-168 (GRS) provides a ligand contact to NADP(+).

It belongs to the tetrahydrofolate dehydrogenase/cyclohydrolase family. As to quaternary structure, homodimer.

The catalysed reaction is (6R)-5,10-methylene-5,6,7,8-tetrahydrofolate + NADP(+) = (6R)-5,10-methenyltetrahydrofolate + NADPH. The enzyme catalyses (6R)-5,10-methenyltetrahydrofolate + H2O = (6R)-10-formyltetrahydrofolate + H(+). Its pathway is one-carbon metabolism; tetrahydrofolate interconversion. Functionally, catalyzes the oxidation of 5,10-methylenetetrahydrofolate to 5,10-methenyltetrahydrofolate and then the hydrolysis of 5,10-methenyltetrahydrofolate to 10-formyltetrahydrofolate. This is Bifunctional protein FolD from Levilactobacillus brevis (strain ATCC 367 / BCRC 12310 / CIP 105137 / JCM 1170 / LMG 11437 / NCIMB 947 / NCTC 947) (Lactobacillus brevis).